The sequence spans 235 residues: Ubiquinone biosynthesis O-methyltransferase (235 aa).

Residues R36, G56, D77, and M122 each coordinate S-adenosyl-L-methionine.

This sequence belongs to the methyltransferase superfamily. UbiG/COQ3 family.

It carries out the reaction a 3-demethylubiquinol + S-adenosyl-L-methionine = a ubiquinol + S-adenosyl-L-homocysteine + H(+). The catalysed reaction is a 3-(all-trans-polyprenyl)benzene-1,2-diol + S-adenosyl-L-methionine = a 2-methoxy-6-(all-trans-polyprenyl)phenol + S-adenosyl-L-homocysteine + H(+). It participates in cofactor biosynthesis; ubiquinone biosynthesis. O-methyltransferase that catalyzes the 2 O-methylation steps in the ubiquinone biosynthetic pathway. The polypeptide is Ubiquinone biosynthesis O-methyltransferase (Leptothrix cholodnii (strain ATCC 51168 / LMG 8142 / SP-6) (Leptothrix discophora (strain SP-6))).